A 256-amino-acid polypeptide reads, in one-letter code: Dioxygenase lolE1 (256 aa).

His-125, Asp-127, and His-203 together coordinate Fe cation.

The protein belongs to the PhyH family. As to quaternary structure, homodimer. Fe cation is required as a cofactor.

Its pathway is alkaloid biosynthesis. Dioxygenase; part of the gene cluster that mediates the biosynthesis of loline alkaloids, potent insecticidal agents composed of a pyrrolizidine ring system and an uncommon ether bridge linking carbons 2 and 7. Lolines are structurally differentiated by the various modifications of the L-amino group and include norloline, loline, N-methylloline, N-acetylloline, N-acetylnorloline, and N-formylloline. The first committed step is the condensation of O-acetyl-L-homoserine (derived from L-aspartic acid) and L-proline, probably catalyzed by the gamma-type pyridoxal 5'-phosphate(PLP)-dependent enzyme lolC, to give the diamino diacid, NACPP. Ensuing cyclization, decarboxylation, and acetylation steps yield 1-exo-acetamidopyrrolizidine (AcAP). LolO is required for installation of the ether bridge upon the pathway intermediate, 1-exo-acetamidopyrrolizidine (AcAP). In sequential 2-oxoglutarate- and O(2)-consuming steps, lolO removes hydrogens from C2 and C7 of AcAP to form both carbon-oxygen bonds in N-acetylnorloline (NANL), the precursor to all other lolines. The enzymes lolD, lolE, lolF and lolT have also been proposed to be involved in the ether-bridge installation. Further processing of the exocyclic moiety of NANL by fungal N-acetamidase (LolN), methyltransferase (LolM), and cytochrome P450 (LolP) enzymes, with occasional involvement of a plant acetyltransferase, generates the other known lolines. LolN transforms NANL to norlonine which is monomethylated and dimethylated to respectively lonine and N-methyllonine (NML) by lolM. LolP catalyzes hydroxylation of the methyl group in N-methylloline (NML) and further oxygenation to N-formylloline (NFL). A plant acetyltransferase is responsible for the acetylation of loline to form N-acetylloline (NAL). LolA might interact with aspartate kinase to prevent feedback inhibition of its activity by these end products and thereby promote production of L-homoserine from L-aspartate. This is Dioxygenase lolE1 from Epichloe uncinata (Endophyte fungus).